Here is a 464-residue protein sequence, read N- to C-terminus: GDNF family receptor alpha-2 (464 aa).

An N-terminal signal peptide occupies residues 1 to 21; the sequence is MILANVFCLFFFLDETLRSLA. 14 cysteine pairs are disulfide-bonded: C40/C93, C47/C53, C63/C78, C95/C105, C161/C222, C168/C174, C185/C200, C195/C241, C224/C229, C251/C323, C258/C264, C275/C293, C285/C347, and C325/C335. Residue N52 is glycosylated (N-linked (GlcNAc...) asparagine). N-linked (GlcNAc...) asparagine glycosylation is found at N357 and N413. S444 carries GPI-anchor amidated serine lipidation. A propeptide spans 445–464 (removed in mature form); it reads RARPSAALTVLSVLMLKLAL.

This sequence belongs to the GDNFR family. Interacts with NRTN ligand and RET: forms a 2:2:2 ternary complex composed of NRTN ligand, GFRA2 and RET receptor. Also forms a 4:4:4 tetrameric complex composed of 4 copies of NRTN ligand, GFRA2 and RET receptor, which prevents endocytosis of RET. Interacts with SORL1.

The protein localises to the cell membrane. Functionally, receptor for neurturin (NRTN), a growth factor that supports the survival of sympathetic neurons. NRTN-binding leads to autophosphorylation and activation of the RET receptor. Also able to mediate GDNF signaling through the RET tyrosine kinase receptor. The protein is GDNF family receptor alpha-2 (GFRA2) of Pongo abelii (Sumatran orangutan).